The chain runs to 511 residues: Maturase K (511 aa).

It belongs to the intron maturase 2 family. MatK subfamily.

The protein resides in the plastid. It localises to the chloroplast. Usually encoded in the trnK tRNA gene intron. Probably assists in splicing its own and other chloroplast group II introns. The polypeptide is Maturase K (Psathyrostachys juncea (Russian wildrye)).